We begin with the raw amino-acid sequence, 223 residues long: Putative 3-methyladenine DNA glycosylase (223 aa).

The protein belongs to the DNA glycosylase MPG family.

The chain is Putative 3-methyladenine DNA glycosylase from Rickettsia typhi (strain ATCC VR-144 / Wilmington).